Consider the following 205-residue polypeptide: Holliday junction branch migration complex subunit RuvA (205 aa).

The segment at Met1–Arg64 is domain I. The domain II stretch occupies residues Ser65 to Val143. The interval Arg144–Ala154 is flexible linker. The tract at residues Ala154–Lys205 is domain III.

The protein belongs to the RuvA family. Homotetramer. Forms an RuvA(8)-RuvB(12)-Holliday junction (HJ) complex. HJ DNA is sandwiched between 2 RuvA tetramers; dsDNA enters through RuvA and exits via RuvB. An RuvB hexamer assembles on each DNA strand where it exits the tetramer. Each RuvB hexamer is contacted by two RuvA subunits (via domain III) on 2 adjacent RuvB subunits; this complex drives branch migration. In the full resolvosome a probable DNA-RuvA(4)-RuvB(12)-RuvC(2) complex forms which resolves the HJ.

The protein localises to the cytoplasm. Functionally, the RuvA-RuvB-RuvC complex processes Holliday junction (HJ) DNA during genetic recombination and DNA repair, while the RuvA-RuvB complex plays an important role in the rescue of blocked DNA replication forks via replication fork reversal (RFR). RuvA specifically binds to HJ cruciform DNA, conferring on it an open structure. The RuvB hexamer acts as an ATP-dependent pump, pulling dsDNA into and through the RuvAB complex. HJ branch migration allows RuvC to scan DNA until it finds its consensus sequence, where it cleaves and resolves the cruciform DNA. This Bradyrhizobium sp. (strain ORS 278) protein is Holliday junction branch migration complex subunit RuvA.